The primary structure comprises 1071 residues: Carbamoyl phosphate synthase large chain (1071 aa).

Residues M1–E403 are carboxyphosphate synthetic domain. Residues R129, R169, G175, G176, Q208, V210, E215, G241, V242, H243, Q285, and E299 each contribute to the ATP site. Positions K133 to V328 constitute an ATP-grasp 1 domain. Positions 285, 299, and 301 each coordinate Mg(2+). Mn(2+) is bound by residues Q285, E299, and N301. An oligomerization domain region spans residues T404–A548. The carbamoyl phosphate synthetic domain stretch occupies residues R549–G930. The 192-residue stretch at Q673–A864 folds into the ATP-grasp 2 domain. The ATP site is built by R709, F748, L750, E755, G780, I781, H782, S783, Q823, and E835. Positions 823, 835, and 837 each coordinate Mg(2+). Mn(2+)-binding residues include Q823, E835, and N837. Residues E931–S1071 enclose the MGS-like domain. Residues E931 to S1071 form an allosteric domain region.

The protein belongs to the CarB family. As to quaternary structure, composed of two chains; the small (or glutamine) chain promotes the hydrolysis of glutamine to ammonia, which is used by the large (or ammonia) chain to synthesize carbamoyl phosphate. Tetramer of heterodimers (alpha,beta)4. Mg(2+) serves as cofactor. Mn(2+) is required as a cofactor.

It catalyses the reaction hydrogencarbonate + L-glutamine + 2 ATP + H2O = carbamoyl phosphate + L-glutamate + 2 ADP + phosphate + 2 H(+). The enzyme catalyses hydrogencarbonate + NH4(+) + 2 ATP = carbamoyl phosphate + 2 ADP + phosphate + 2 H(+). The protein operates within amino-acid biosynthesis; L-arginine biosynthesis; carbamoyl phosphate from bicarbonate: step 1/1. It functions in the pathway pyrimidine metabolism; UMP biosynthesis via de novo pathway; (S)-dihydroorotate from bicarbonate: step 1/3. Functionally, large subunit of the glutamine-dependent carbamoyl phosphate synthetase (CPSase). CPSase catalyzes the formation of carbamoyl phosphate from the ammonia moiety of glutamine, carbonate, and phosphate donated by ATP, constituting the first step of 2 biosynthetic pathways, one leading to arginine and/or urea and the other to pyrimidine nucleotides. The large subunit (synthetase) binds the substrates ammonia (free or transferred from glutamine from the small subunit), hydrogencarbonate and ATP and carries out an ATP-coupled ligase reaction, activating hydrogencarbonate by forming carboxy phosphate which reacts with ammonia to form carbamoyl phosphate. The sequence is that of Carbamoyl phosphate synthase large chain from Neisseria meningitidis serogroup A / serotype 4A (strain DSM 15465 / Z2491).